Here is a 74-residue protein sequence, read N- to C-terminus: Protein RALF-like 25 (74 aa).

A signal peptide spans 1–22; sequence MKTFMIILLVICSILIVGRVEA. Intrachain disulfides connect C35–C44 and C62–C68.

It belongs to the plant rapid alkalinization factor (RALF) family.

The protein resides in the secreted. Its function is as follows. Cell signaling peptide that may regulate plant stress, growth, and development. Mediates a rapid alkalinization of extracellular space by mediating a transient increase in the cytoplasmic Ca(2+) concentration leading to a calcium-dependent signaling events through a cell surface receptor and a concomitant activation of some intracellular mitogen-activated protein kinases. The sequence is that of Protein RALF-like 25 (RALFL25) from Arabidopsis thaliana (Mouse-ear cress).